The following is an 875-amino-acid chain: Valine--tRNA ligase (875 aa).

Positions proline 44–histidine 54 match the 'HIGH' region motif. The 'KMSKS' region motif lies at lysine 520–serine 524. Lysine 523 contacts ATP. Residues leucine 804–glutamine 875 are a coiled coil.

It belongs to the class-I aminoacyl-tRNA synthetase family. ValS type 1 subfamily. Monomer.

The protein resides in the cytoplasm. It carries out the reaction tRNA(Val) + L-valine + ATP = L-valyl-tRNA(Val) + AMP + diphosphate. Functionally, catalyzes the attachment of valine to tRNA(Val). As ValRS can inadvertently accommodate and process structurally similar amino acids such as threonine, to avoid such errors, it has a 'posttransfer' editing activity that hydrolyzes mischarged Thr-tRNA(Val) in a tRNA-dependent manner. The polypeptide is Valine--tRNA ligase (Anoxybacillus flavithermus (strain DSM 21510 / WK1)).